The sequence spans 286 residues: Polyamine aminopropyltransferase (286 aa).

Residues 5–242 enclose the PABS domain; the sequence is DNWFTEVLEE…GWWSATLASK (238 aa). Gln35 contacts S-methyl-5'-thioadenosine. Positions 66 and 90 each coordinate spermidine. S-methyl-5'-thioadenosine-binding positions include Asp110 and 141–142; that span reads DG. Asp160 (proton acceptor) is an active-site residue. Residue 160–163 coordinates spermidine; it reads DSTD.

This sequence belongs to the spermidine/spermine synthase family. As to quaternary structure, homodimer or homotetramer.

It localises to the cytoplasm. It carries out the reaction S-adenosyl 3-(methylsulfanyl)propylamine + putrescine = S-methyl-5'-thioadenosine + spermidine + H(+). It participates in amine and polyamine biosynthesis; spermidine biosynthesis; spermidine from putrescine: step 1/1. Catalyzes the irreversible transfer of a propylamine group from the amino donor S-adenosylmethioninamine (decarboxy-AdoMet) to putrescine (1,4-diaminobutane) to yield spermidine. This chain is Polyamine aminopropyltransferase, found in Alkalilimnicola ehrlichii (strain ATCC BAA-1101 / DSM 17681 / MLHE-1).